Here is a 307-residue protein sequence, read N- to C-terminus: S-methyl-5'-thioadenosine phosphorylase (307 aa).

Residues serine 16, 59–60 (RH), and 92–93 (SA) each bind phosphate. Residue methionine 198 participates in substrate binding. Serine 199 is a phosphate binding site. A substrate-binding site is contributed by 222 to 224 (DYD).

The protein belongs to the PNP/MTAP phosphorylase family. MTAP subfamily. As to quaternary structure, homotrimer.

Its subcellular location is the cytoplasm. It localises to the nucleus. The enzyme catalyses S-methyl-5'-thioadenosine + phosphate = 5-(methylsulfanyl)-alpha-D-ribose 1-phosphate + adenine. It participates in amino-acid biosynthesis; L-methionine biosynthesis via salvage pathway; S-methyl-5-thio-alpha-D-ribose 1-phosphate from S-methyl-5'-thioadenosine (phosphorylase route): step 1/1. Its function is as follows. Catalyzes the reversible phosphorylation of S-methyl-5'-thioadenosine (MTA) to adenine and 5-methylthioribose-1-phosphate. Involved in the breakdown of MTA, a major by-product of polyamine biosynthesis. Responsible for the first step in the methionine salvage pathway after MTA has been generated from S-adenosylmethionine. Has broad substrate specificity with 6-aminopurine nucleosides as preferred substrates. The protein is S-methyl-5'-thioadenosine phosphorylase of Schizosaccharomyces pombe (strain 972 / ATCC 24843) (Fission yeast).